Reading from the N-terminus, the 183-residue chain is 2-epi-5-epi-valiolone epimerase (183 aa).

In terms of domain architecture, VOC spans A11 to L155. The a divalent metal cation site is built by H14, E76, H99, and E151.

Homodimer. Requires a divalent metal cation as cofactor.

It catalyses the reaction 2-epi-5-epi-valiolone = 5-epi-valiolone. It functions in the pathway antibiotic biosynthesis. Catalyzes the epimerization of 2-epi-5-epi-valiolone to 5-epi-valiolone. Involved in cetoniacytone A biosynthesis. This Actinomyces sp protein is 2-epi-5-epi-valiolone epimerase.